Reading from the N-terminus, the 471-residue chain is MVKAIASLMLLHIWAIEEIKAERQAPSVSRTECTTPCRCAQRLEKLKKHCQMRVQTAVRKQKENGKLAQKLLIGTITSTAGGGEQTSTTSFLLSNSSPTRRETLETNQAEIMSQLEHIIAMEAQYYAILNVSATSTDTTLDGDGTQYNTGSITSGGFTVSKTTECNTESPEDTKEPDQTTLSKKQGLKDLKLALRVKVACKNGGGACSAASSSDKIHITNETDSKNKGTTASTMNSQNTAVAFATDLQIVNWKSDHIDSNITALANALTALDSIPDLTDPAAYTADAAFKQLVATVTLNKPPTTELTGEVLDAVNRACADNYGTSASELTTKIWDPLNEQAASYYSDKTIKTDQLKLLTSNQQLTTALGVALAKAINVKEASKKECNLHGHETDATCEAKGVGDNCKPPCKEVEEGGKKKCKLDKEEAKRVAEQAATNQETEGKDGKTTNTTGSNSFLINKAPVLLAFLLL.

The first 21 residues, 1–21 (MVKAIASLMLLHIWAIEEIKA), serve as a signal peptide directing secretion. Asparagine 130 is a glycosylation site (N-linked (GlcNAc...) asparagine). Residues 158–168 (TVSKTTECNTE) are compositionally biased toward polar residues. Disordered regions lie at residues 158–183 (TVSK…TLSK) and 204–232 (GGAC…TTAS). Basic and acidic residues predominate over residues 214-226 (DKIHITNETDSKN). 2 N-linked (GlcNAc...) asparagine glycosylation sites follow: asparagine 220 and asparagine 260. Disulfide bonds link cysteine 397-cysteine 410 and cysteine 406-cysteine 421. The segment at 432–454 (AEQAATNQETEGKDGKTTNTTGS) is disordered. Residue asparagine 450 is glycosylated (N-linked (GlcNAc...) asparagine). Residue serine 454 is the site of GPI-anchor amidated serine attachment. A propeptide spans 455-471 (NSFLINKAPVLLAFLLL) (removed in mature form).

It is found in the cell membrane. In terms of biological role, VSG forms a coat on the surface of the parasite. The trypanosome evades the immune response of the host by expressing a series of antigenically distinct VSGs from an estimated 1000 VSG genes. The protein is Variant surface glycoprotein ILTAT 1.1BC of Trypanosoma brucei brucei.